Here is a 503-residue protein sequence, read N- to C-terminus: Lysine--tRNA ligase (503 aa).

2 residues coordinate Mg(2+): Glu-413 and Glu-420.

Belongs to the class-II aminoacyl-tRNA synthetase family. As to quaternary structure, homodimer. The cofactor is Mg(2+).

Its subcellular location is the cytoplasm. The catalysed reaction is tRNA(Lys) + L-lysine + ATP = L-lysyl-tRNA(Lys) + AMP + diphosphate. This chain is Lysine--tRNA ligase, found in Mannheimia succiniciproducens (strain KCTC 0769BP / MBEL55E).